The sequence spans 562 residues: Furostanol glycoside 26-O-beta-glucosidase (562 aa).

The N-terminal 44 residues, 1 to 44, are a transit peptide targeting the chloroplast; that stretch reads MAAQLGLPLVSCHRGASQAASSSAHLVPGASAIMQAGNRRQKMR. A beta-D-glucoside is bound by residues glutamine 110, histidine 214, and 259 to 260; that span reads NE. Glutamate 260 acts as the Proton donor in catalysis. An intrachain disulfide couples cysteine 279 to cysteine 285. Residues tyrosine 401, glutamate 472, tryptophan 518, 525–526, and phenylalanine 534 each bind a beta-D-glucoside; that span reads EW. Glutamate 472 (nucleophile) is an active-site residue.

This sequence belongs to the glycosyl hydrolase 1 family. Heterodimer. The N-terminus of the larger subunit is blocked and the smaller subunit might be derived from the larger one.

It is found in the plastid. Its subcellular location is the chloroplast. It carries out the reaction protodioscin + H2O = 26-deglucoprotodioscin + D-glucose. With respect to regulation, partially inhibited by glucono-1,5-lactone, conduritol beta-epoxide and diosgenin, but not by beta-sitosterol or cholesterol. Beta-glucosidase involved in saponin metabolism. Highly specific for the cleavage of C-26-bound glucose moiety of furostanol glycosides such as protogracillin and protodioscin. No activity with nuatigenin glycoside. Convers furostanol glycosides to spirostanol glycosides. The polypeptide is Furostanol glycoside 26-O-beta-glucosidase (Hellenia speciosa (Crepe ginger)).